A 365-amino-acid chain; its full sequence is tRNA(Met) cytidine acetate ligase (365 aa).

ATP contacts are provided by residues 7-20 (IAEF…HKYL), Gly96, Asn152, and Arg175.

The protein belongs to the TmcAL family.

It is found in the cytoplasm. The catalysed reaction is cytidine(34) in elongator tRNA(Met) + acetate + ATP = N(4)-acetylcytidine(34) in elongator tRNA(Met) + AMP + diphosphate. Its function is as follows. Catalyzes the formation of N(4)-acetylcytidine (ac(4)C) at the wobble position of elongator tRNA(Met), using acetate and ATP as substrates. First activates an acetate ion to form acetyladenylate (Ac-AMP) and then transfers the acetyl group to tRNA to form ac(4)C34. This chain is tRNA(Met) cytidine acetate ligase, found in Streptococcus pneumoniae (strain Hungary19A-6).